Consider the following 418-residue polypeptide: uncharacterized protein (418 aa).

This is an uncharacterized protein from Invertebrate iridescent virus 6 (IIV-6).